Here is a 602-residue protein sequence, read N- to C-terminus: Elongation factor 4 (602 aa).

The 183-residue stretch at 5 to 187 (DHIRNFAIIA…QIIVSLPAPE (183 aa)) folds into the tr-type G domain. GTP contacts are provided by residues 17-22 (DHGKST) and 134-137 (NKVD).

It belongs to the TRAFAC class translation factor GTPase superfamily. Classic translation factor GTPase family. LepA subfamily.

The protein localises to the cell inner membrane. The catalysed reaction is GTP + H2O = GDP + phosphate + H(+). Required for accurate and efficient protein synthesis under certain stress conditions. May act as a fidelity factor of the translation reaction, by catalyzing a one-codon backward translocation of tRNAs on improperly translocated ribosomes. Back-translocation proceeds from a post-translocation (POST) complex to a pre-translocation (PRE) complex, thus giving elongation factor G a second chance to translocate the tRNAs correctly. Binds to ribosomes in a GTP-dependent manner. This is Elongation factor 4 from Pelagibacter ubique (strain HTCC1062).